The sequence spans 795 residues: Phenylalanine--tRNA ligase beta subunit (795 aa).

Residues 39–148 (AGSFNGVVVG…ADAPLGTDIR (110 aa)) form the tRNA-binding domain. The region spanning 401–476 (PKRATITLRR…RVYGYNNIPD (76 aa)) is the B5 domain. Residues aspartate 454, aspartate 460, glutamate 463, and glutamate 464 each contribute to the Mg(2+) site. The FDX-ACB domain occupies 701–794 (SRFPANRRDI…LKERFQASLR (94 aa)).

This sequence belongs to the phenylalanyl-tRNA synthetase beta subunit family. Type 1 subfamily. As to quaternary structure, tetramer of two alpha and two beta subunits. Requires Mg(2+) as cofactor.

The protein resides in the cytoplasm. It carries out the reaction tRNA(Phe) + L-phenylalanine + ATP = L-phenylalanyl-tRNA(Phe) + AMP + diphosphate + H(+). This Salmonella paratyphi A (strain ATCC 9150 / SARB42) protein is Phenylalanine--tRNA ligase beta subunit.